A 241-amino-acid chain; its full sequence is Methylthioribulose-1-phosphate dehydratase (241 aa).

Residues 1–20 form a disordered region; the sequence is MSAIKDERNNDHLVQSHDPE. Residue Cys100 participates in substrate binding. 2 residues coordinate Zn(2+): His117 and His119. The active-site Proton donor/acceptor is the Glu146. His202 provides a ligand contact to Zn(2+).

It belongs to the aldolase class II family. MtnB subfamily. The cofactor is Zn(2+).

The protein localises to the cytoplasm. The enzyme catalyses 5-(methylsulfanyl)-D-ribulose 1-phosphate = 5-methylsulfanyl-2,3-dioxopentyl phosphate + H2O. It functions in the pathway amino-acid biosynthesis; L-methionine biosynthesis via salvage pathway; L-methionine from S-methyl-5-thio-alpha-D-ribose 1-phosphate: step 2/6. Its function is as follows. Catalyzes the dehydration of methylthioribulose-1-phosphate (MTRu-1-P) into 2,3-diketo-5-methylthiopentyl-1-phosphate (DK-MTP-1-P). The protein is Methylthioribulose-1-phosphate dehydratase of Blastomyces gilchristii (strain SLH14081) (Blastomyces dermatitidis).